The sequence spans 748 residues: Catalase-peroxidase (748 aa).

The tryptophyl-tyrosyl-methioninium (Trp-Tyr) (with M-264) cross-link spans 92–238 (WHSAGTYRIG…LAAVQMGLIY (147 aa)). Histidine 93 (proton acceptor) is an active-site residue. The segment at residues 238 to 264 (YVNPEGPDGNPDPIASARDIRDTFARM) is a cross-link (tryptophyl-tyrosyl-methioninium (Tyr-Met) (with W-92)). Histidine 279 contributes to the heme b binding site.

This sequence belongs to the peroxidase family. Peroxidase/catalase subfamily. Homodimer or homotetramer. Heme b is required as a cofactor. Formation of the three residue Trp-Tyr-Met cross-link is important for the catalase, but not the peroxidase activity of the enzyme.

It catalyses the reaction H2O2 + AH2 = A + 2 H2O. The enzyme catalyses 2 H2O2 = O2 + 2 H2O. Its function is as follows. Bifunctional enzyme with both catalase and broad-spectrum peroxidase activity. The chain is Catalase-peroxidase from Xanthomonas euvesicatoria pv. vesicatoria (strain 85-10) (Xanthomonas campestris pv. vesicatoria).